We begin with the raw amino-acid sequence, 212 residues long: Imidazole glycerol phosphate synthase subunit HisH (212 aa).

Residues 3-211 (LIAVIDYDMG…VQQVQKLALV (209 aa)) form the Glutamine amidotransferase type-1 domain. The Nucleophile role is filled by cysteine 81. Residues histidine 186 and glutamate 188 contribute to the active site.

As to quaternary structure, heterodimer of HisH and HisF.

It localises to the cytoplasm. The catalysed reaction is 5-[(5-phospho-1-deoxy-D-ribulos-1-ylimino)methylamino]-1-(5-phospho-beta-D-ribosyl)imidazole-4-carboxamide + L-glutamine = D-erythro-1-(imidazol-4-yl)glycerol 3-phosphate + 5-amino-1-(5-phospho-beta-D-ribosyl)imidazole-4-carboxamide + L-glutamate + H(+). It carries out the reaction L-glutamine + H2O = L-glutamate + NH4(+). It participates in amino-acid biosynthesis; L-histidine biosynthesis; L-histidine from 5-phospho-alpha-D-ribose 1-diphosphate: step 5/9. Functionally, IGPS catalyzes the conversion of PRFAR and glutamine to IGP, AICAR and glutamate. The HisH subunit catalyzes the hydrolysis of glutamine to glutamate and ammonia as part of the synthesis of IGP and AICAR. The resulting ammonia molecule is channeled to the active site of HisF. This chain is Imidazole glycerol phosphate synthase subunit HisH, found in Microcystis aeruginosa (strain NIES-843 / IAM M-2473).